Reading from the N-terminus, the 297-residue chain is 4-hydroxy-tetrahydrodipicolinate synthase (297 aa).

Pyruvate is bound at residue threonine 55. The Proton donor/acceptor role is filled by tyrosine 144. The active-site Schiff-base intermediate with substrate is lysine 172. Isoleucine 213 provides a ligand contact to pyruvate.

The protein belongs to the DapA family. Homotetramer; dimer of dimers.

The protein localises to the cytoplasm. It catalyses the reaction L-aspartate 4-semialdehyde + pyruvate = (2S,4S)-4-hydroxy-2,3,4,5-tetrahydrodipicolinate + H2O + H(+). It functions in the pathway amino-acid biosynthesis; L-lysine biosynthesis via DAP pathway; (S)-tetrahydrodipicolinate from L-aspartate: step 3/4. In terms of biological role, catalyzes the condensation of (S)-aspartate-beta-semialdehyde [(S)-ASA] and pyruvate to 4-hydroxy-tetrahydrodipicolinate (HTPA). This chain is 4-hydroxy-tetrahydrodipicolinate synthase, found in Lactococcus lactis subsp. cremoris (strain MG1363).